The following is a 376-amino-acid chain: ATP phosphoribosyltransferase regulatory subunit (376 aa).

Belongs to the class-II aminoacyl-tRNA synthetase family. HisZ subfamily. In terms of assembly, heteromultimer composed of HisG and HisZ subunits.

It localises to the cytoplasm. The protein operates within amino-acid biosynthesis; L-histidine biosynthesis; L-histidine from 5-phospho-alpha-D-ribose 1-diphosphate: step 1/9. Functionally, required for the first step of histidine biosynthesis. May allow the feedback regulation of ATP phosphoribosyltransferase activity by histidine. This chain is ATP phosphoribosyltransferase regulatory subunit, found in Brucella canis (strain ATCC 23365 / NCTC 10854 / RM-666).